A 393-amino-acid polypeptide reads, in one-letter code: Branched-chain amino acid aminotransferase 1, mitochondrial (393 aa).

Residues 1-34 (MIHRGLWLHNLVQSYRVGSSSSSSTLFKLVYRYN) constitute a mitochondrion transit peptide. Residue arginine 138 coordinates pyridoxal 5'-phosphate. Lysine 240 serves as the catalytic Proton acceptor. At lysine 240 the chain carries N6-(pyridoxal phosphate)lysine. Residue glutamate 276 coordinates pyridoxal 5'-phosphate.

The protein belongs to the class-IV pyridoxal-phosphate-dependent aminotransferase family. It depends on pyridoxal 5'-phosphate as a cofactor. Expressed specifically in lupulin glands.

It localises to the mitochondrion. It catalyses the reaction L-isoleucine + 2-oxoglutarate = (S)-3-methyl-2-oxopentanoate + L-glutamate. The enzyme catalyses L-leucine + 2-oxoglutarate = 4-methyl-2-oxopentanoate + L-glutamate. The catalysed reaction is L-valine + 2-oxoglutarate = 3-methyl-2-oxobutanoate + L-glutamate. Its pathway is amino-acid biosynthesis; L-isoleucine biosynthesis; L-isoleucine from 2-oxobutanoate: step 4/4. It participates in amino-acid biosynthesis; L-leucine biosynthesis; L-leucine from 3-methyl-2-oxobutanoate: step 4/4. The protein operates within amino-acid biosynthesis; L-valine biosynthesis; L-valine from pyruvate: step 4/4. In terms of biological role, converts 2-oxo acids to branched-chain amino acids (BCAA). Shows no kinetic preferences corresponding to anabolic or catabolic functions, but likely involved in BCAA catabolism. This Humulus lupulus (European hop) protein is Branched-chain amino acid aminotransferase 1, mitochondrial.